Reading from the N-terminus, the 476-residue chain is Bifunctional protein HldE (476 aa).

Residues 1 to 319 (MKISLPAFEK…AALNLSHGES (319 aa)) are ribokinase. 195-198 (NMSE) lines the ATP pocket. Aspartate 264 is an active-site residue. A cytidylyltransferase region spans residues 345–476 (MTNGCFDILH…AIIENIMAKQ (132 aa)).

This sequence in the N-terminal section; belongs to the carbohydrate kinase PfkB family. In the C-terminal section; belongs to the cytidylyltransferase family. As to quaternary structure, homodimer.

It catalyses the reaction D-glycero-beta-D-manno-heptose 7-phosphate + ATP = D-glycero-beta-D-manno-heptose 1,7-bisphosphate + ADP + H(+). The catalysed reaction is D-glycero-beta-D-manno-heptose 1-phosphate + ATP + H(+) = ADP-D-glycero-beta-D-manno-heptose + diphosphate. Its pathway is nucleotide-sugar biosynthesis; ADP-L-glycero-beta-D-manno-heptose biosynthesis; ADP-L-glycero-beta-D-manno-heptose from D-glycero-beta-D-manno-heptose 7-phosphate: step 1/4. It participates in nucleotide-sugar biosynthesis; ADP-L-glycero-beta-D-manno-heptose biosynthesis; ADP-L-glycero-beta-D-manno-heptose from D-glycero-beta-D-manno-heptose 7-phosphate: step 3/4. Catalyzes the phosphorylation of D-glycero-D-manno-heptose 7-phosphate at the C-1 position to selectively form D-glycero-beta-D-manno-heptose-1,7-bisphosphate. Its function is as follows. Catalyzes the ADP transfer from ATP to D-glycero-beta-D-manno-heptose 1-phosphate, yielding ADP-D-glycero-beta-D-manno-heptose. In Shewanella loihica (strain ATCC BAA-1088 / PV-4), this protein is Bifunctional protein HldE.